Consider the following 80-residue polypeptide: Cytochrome c oxidase subunit 7B, mitochondrial (80 aa).

Residues 1 to 24 (MLPLAKNALSRLQVRSIQQVVARQ) constitute a mitochondrion transit peptide. Over 25–32 (SHQKKTPT) the chain is Mitochondrial matrix. A helical membrane pass occupies residues 33-59 (FHDKYGNAVLAGGSIFCISAWTYTATQ). The Mitochondrial intermembrane segment spans residues 60–80 (IGIEWNLSPVGRVTPKEWRDQ).

Belongs to the cytochrome c oxidase VIIb family. In terms of assembly, component of the cytochrome c oxidase (complex IV, CIV), a multisubunit enzyme composed of 14 subunits. The complex is composed of a catalytic core of 3 subunits MT-CO1, MT-CO2 and MT-CO3, encoded in the mitochondrial DNA, and 11 supernumerary subunits COX4I, COX5A, COX5B, COX6A, COX6B, COX6C, COX7A, COX7B, COX7C, COX8 and NDUFA4, which are encoded in the nuclear genome. The complex exists as a monomer or a dimer and forms supercomplexes (SCs) in the inner mitochondrial membrane with NADH-ubiquinone oxidoreductase (complex I, CI) and ubiquinol-cytochrome c oxidoreductase (cytochrome b-c1 complex, complex III, CIII), resulting in different assemblies (supercomplex SCI(1)III(2)IV(1) and megacomplex MCI(2)III(2)IV(2)).

It localises to the mitochondrion inner membrane. It functions in the pathway energy metabolism; oxidative phosphorylation. Component of the cytochrome c oxidase, the last enzyme in the mitochondrial electron transport chain which drives oxidative phosphorylation. The respiratory chain contains 3 multisubunit complexes succinate dehydrogenase (complex II, CII), ubiquinol-cytochrome c oxidoreductase (cytochrome b-c1 complex, complex III, CIII) and cytochrome c oxidase (complex IV, CIV), that cooperate to transfer electrons derived from NADH and succinate to molecular oxygen, creating an electrochemical gradient over the inner membrane that drives transmembrane transport and the ATP synthase. Cytochrome c oxidase is the component of the respiratory chain that catalyzes the reduction of oxygen to water. Electrons originating from reduced cytochrome c in the intermembrane space (IMS) are transferred via the dinuclear copper A center (CU(A)) of subunit 2 and heme A of subunit 1 to the active site in subunit 1, a binuclear center (BNC) formed by heme A3 and copper B (CU(B)). The BNC reduces molecular oxygen to 2 water molecules using 4 electrons from cytochrome c in the IMS and 4 protons from the mitochondrial matrix. Plays a role in proper central nervous system (CNS) development in vertebrates. The chain is Cytochrome c oxidase subunit 7B, mitochondrial (Cox7b) from Rattus norvegicus (Rat).